The following is a 306-amino-acid chain: tRNA dimethylallyltransferase 1 (306 aa).

15–22 provides a ligand contact to ATP; that stretch reads GPTGSGKS. 17 to 22 serves as a coordination point for substrate; sequence TGSGKS. Positions 40–43 are interaction with substrate tRNA; the sequence is DSMQ.

Belongs to the IPP transferase family. Monomer. It depends on Mg(2+) as a cofactor.

It carries out the reaction adenosine(37) in tRNA + dimethylallyl diphosphate = N(6)-dimethylallyladenosine(37) in tRNA + diphosphate. Functionally, catalyzes the transfer of a dimethylallyl group onto the adenine at position 37 in tRNAs that read codons beginning with uridine, leading to the formation of N6-(dimethylallyl)adenosine (i(6)A). This Citrifermentans bemidjiense (strain ATCC BAA-1014 / DSM 16622 / JCM 12645 / Bem) (Geobacter bemidjiensis) protein is tRNA dimethylallyltransferase 1.